A 131-amino-acid chain; its full sequence is Bacteriohemerythrin (131 aa).

The Fe cation site is built by His-22, His-58, Glu-62, His-77, His-81, His-117, and Asp-122.

This sequence belongs to the hemerythrin family. Monomer.

Functionally, oxygen-binding protein. May be involved in a storage mechanism or for delivery to oxygen-requiring enzymes. The oxygen-binding site contains two iron atoms. This is Bacteriohemerythrin from Methylococcus capsulatus (strain ATCC 33009 / NCIMB 11132 / Bath).